A 409-amino-acid chain; its full sequence is MREEFLEEIPLDAPPEEAKELRTEVMTLNVGPQHPSTHGVLRLMVTLSGEEVLEVVPHIGYLHTGFEKTMEHRTYLQNITYTPRMDYLHSFAHDLAYALAVEKLLGAVVPPRAETIRVILNELSRLASHLVFLGTGLLDLGALTPFFYAFRERETILDLFEWVTGQRFHHNYIRIGGVKEDLPEEFVPELKKLLEVLPHRIDEYEALFAESPIFYERARGVGVIPPEVAIDLGLTGGSLRASGVNYDVRKAYPYSGYETYTFDVPLGERGDVFDRMLVRIREMRESVKIIKQALERLEPGPVRDPNPQITPPPRHLLETSMEAVIYHFKHYTEGFHPPKGEVYVPTESARGELGYYIVSDGGSMPYRVKVRAPSFVNLQSLPYACKGEQVPDMVAIIASLDPVMGDVDR.

This sequence belongs to the complex I 49 kDa subunit family. In terms of assembly, NDH-1 is composed of 15 different subunits, Nqo1 to Nqo15. The complex has a L-shaped structure, with the hydrophobic arm (subunits Nqo7, Nqo8 and Nqo10 to Nqo14) embedded in the membrane and the hydrophilic peripheral arm (subunits Nqo1 to Nqo6, Nqo9 and Nqo15) protruding into the bacterial cytoplasm. The hydrophilic domain contains all the redox centers. This subunit interacts extensively with Nqo6.

It localises to the cell membrane. It carries out the reaction a quinone + NADH + 5 H(+)(in) = a quinol + NAD(+) + 4 H(+)(out). NDH-1 shuttles electrons from NADH, via FMN and iron-sulfur (Fe-S) centers, to quinones in the respiratory chain. The immediate electron acceptor for the enzyme in this species is menaquinone. Couples the redox reaction to proton translocation (for every two electrons transferred, four hydrogen ions are translocated across the cytoplasmic membrane), and thus conserves the redox energy in a proton gradient required for the synthesis of ATP. The Nqo4 subunit may contain the quinone-binding site. The chain is NADH-quinone oxidoreductase subunit 4 (nqo4) from Thermus thermophilus (strain ATCC 27634 / DSM 579 / HB8).